We begin with the raw amino-acid sequence, 648 residues long: Probable alpha-galactosidase D (648 aa).

The signal sequence occupies residues 1–16 (MEFIVSLLLLSPALVA). N-linked (GlcNAc...) asparagine glycosylation is found at Asn84 and Asn90. Residues Cys123 and Cys156 are joined by a disulfide bond. Residue Asp154 is the Nucleophile of the active site. 199-203 (EWGID) serves as a coordination point for substrate. The active-site Proton donor is Asp221. N-linked (GlcNAc...) asparagine glycosylation is found at Asn339, Asn350, Asn505, and Asn572.

Belongs to the glycosyl hydrolase 27 family.

It localises to the secreted. The enzyme catalyses Hydrolysis of terminal, non-reducing alpha-D-galactose residues in alpha-D-galactosides, including galactose oligosaccharides, galactomannans and galactolipids.. Functionally, hydrolyzes a variety of simple alpha-D-galactoside as well as more complex molecules such as oligosaccharides and polysaccharides. This Aspergillus fumigatus (strain CBS 144.89 / FGSC A1163 / CEA10) (Neosartorya fumigata) protein is Probable alpha-galactosidase D (aglD).